Here is a 350-residue protein sequence, read N- to C-terminus: Phenylalanine--tRNA ligase alpha subunit (350 aa).

Glu-262 provides a ligand contact to Mg(2+).

This sequence belongs to the class-II aminoacyl-tRNA synthetase family. Phe-tRNA synthetase alpha subunit type 1 subfamily. As to quaternary structure, tetramer of two alpha and two beta subunits. Mg(2+) is required as a cofactor.

It localises to the cytoplasm. It catalyses the reaction tRNA(Phe) + L-phenylalanine + ATP = L-phenylalanyl-tRNA(Phe) + AMP + diphosphate + H(+). This is Phenylalanine--tRNA ligase alpha subunit (pheS) from Thermus thermophilus (strain ATCC 27634 / DSM 579 / HB8).